The sequence spans 389 residues: Sulfate adenylyltransferase (389 aa).

This sequence belongs to the sulfate adenylyltransferase family.

It catalyses the reaction sulfate + ATP + H(+) = adenosine 5'-phosphosulfate + diphosphate. It participates in sulfur metabolism; hydrogen sulfide biosynthesis; sulfite from sulfate: step 1/3. The polypeptide is Sulfate adenylyltransferase (Desulforamulus reducens (strain ATCC BAA-1160 / DSM 100696 / MI-1) (Desulfotomaculum reducens)).